Here is a 283-residue protein sequence, read N- to C-terminus: Shikimate dehydrogenase (NADP(+)) (283 aa).

Shikimate is bound by residues 22 to 24 (SRS) and threonine 69. Lysine 73 serves as the catalytic Proton acceptor. 2 residues coordinate shikimate: asparagine 93 and aspartate 108. NADP(+) contacts are provided by residues 133 to 137 (GAGGS) and leucine 222. Tyrosine 224 provides a ligand contact to shikimate. Position 245 (glycine 245) interacts with NADP(+).

It belongs to the shikimate dehydrogenase family. Homodimer.

The enzyme catalyses shikimate + NADP(+) = 3-dehydroshikimate + NADPH + H(+). The protein operates within metabolic intermediate biosynthesis; chorismate biosynthesis; chorismate from D-erythrose 4-phosphate and phosphoenolpyruvate: step 4/7. Involved in the biosynthesis of the chorismate, which leads to the biosynthesis of aromatic amino acids. Catalyzes the reversible NADPH linked reduction of 3-dehydroshikimate (DHSA) to yield shikimate (SA). In Rhodopseudomonas palustris (strain BisB5), this protein is Shikimate dehydrogenase (NADP(+)).